The sequence spans 200 residues: Lipopolysaccharide core heptose(II)-phosphate phosphatase (200 aa).

An N-terminal signal peptide occupies residues Met1–Ala25.

This sequence belongs to the phosphoglycerate mutase family. Ais subfamily.

Its subcellular location is the periplasm. Its pathway is bacterial outer membrane biogenesis; lipopolysaccharide metabolism. Catalyzes the dephosphorylation of heptose(II) of the outer membrane lipopolysaccharide core. This chain is Lipopolysaccharide core heptose(II)-phosphate phosphatase, found in Escherichia coli O17:K52:H18 (strain UMN026 / ExPEC).